Here is a 416-residue protein sequence, read N- to C-terminus: Splicing factor U2AF 50 kDa subunit (416 aa).

Residues M1–R10 show a composition bias toward basic and acidic residues. Residues M1–P47 are disordered. Basic residues-rich tracts occupy residues E11–D21 and D29–P40. RRM domains are found at residues R93 to D175, H207 to V285, and E318 to P408.

The protein belongs to the splicing factor SR family. As to quaternary structure, forms a heterodimer with the U2AF small subunit.

Its subcellular location is the nucleus. Necessary for the splicing of pre-mRNA. Binds to the polypyrimidine tract of introns early during spliceosome assembly. This Drosophila melanogaster (Fruit fly) protein is Splicing factor U2AF 50 kDa subunit (U2af50).